Here is a 350-residue protein sequence, read N- to C-terminus: tRNA uridine(34) hydroxylase (350 aa).

The region spanning 146–240 is the Rhodanese domain; that stretch reads DDPEAVFVDM…YARRAREQGL (95 aa). Cysteine 200 serves as the catalytic Cysteine persulfide intermediate.

It belongs to the TrhO family.

The catalysed reaction is uridine(34) in tRNA + AH2 + O2 = 5-hydroxyuridine(34) in tRNA + A + H2O. Functionally, catalyzes oxygen-dependent 5-hydroxyuridine (ho5U) modification at position 34 in tRNAs. The polypeptide is tRNA uridine(34) hydroxylase (Erwinia tasmaniensis (strain DSM 17950 / CFBP 7177 / CIP 109463 / NCPPB 4357 / Et1/99)).